Here is a 124-residue protein sequence, read N- to C-terminus: Seripauperin-17 (124 aa).

The N-terminal stretch at 1–20 (MVKLTSIAAGVAAIAAGVAA) is a signal peptide.

It belongs to the SRP1/TIP1 family. Seripauperin subfamily.

The sequence is that of Seripauperin-17 (PAU17) from Saccharomyces cerevisiae (strain ATCC 204508 / S288c) (Baker's yeast).